A 115-amino-acid chain; its full sequence is Photosystem II reaction center Psb28 protein (115 aa).

This sequence belongs to the Psb28 family. As to quaternary structure, part of the photosystem II complex.

It localises to the plastid. It is found in the chloroplast thylakoid membrane. This Phaeodactylum tricornutum (strain CCAP 1055/1) protein is Photosystem II reaction center Psb28 protein.